We begin with the raw amino-acid sequence, 458 residues long: tRNA modification GTPase MnmE (458 aa).

Residues Arg-22, Glu-84, and Arg-123 each coordinate (6S)-5-formyl-5,6,7,8-tetrahydrofolate. Residues 220–379 (GIATAIIGRP…LEKAIADLFF (160 aa)) form the TrmE-type G domain. Asn-230 provides a ligand contact to K(+). Residues 230-235 (NVGKSS), 249-255 (TDIAGTT), and 274-277 (DTAG) contribute to the GTP site. Residue Ser-234 coordinates Mg(2+). The K(+) site is built by Thr-249, Ile-251, and Thr-254. Thr-255 provides a ligand contact to Mg(2+). Lys-458 serves as a coordination point for (6S)-5-formyl-5,6,7,8-tetrahydrofolate.

The protein belongs to the TRAFAC class TrmE-Era-EngA-EngB-Septin-like GTPase superfamily. TrmE GTPase family. As to quaternary structure, homodimer. Heterotetramer of two MnmE and two MnmG subunits. K(+) serves as cofactor.

Its subcellular location is the cytoplasm. Its function is as follows. Exhibits a very high intrinsic GTPase hydrolysis rate. Involved in the addition of a carboxymethylaminomethyl (cmnm) group at the wobble position (U34) of certain tRNAs, forming tRNA-cmnm(5)s(2)U34. The sequence is that of tRNA modification GTPase MnmE from Bacillus anthracis.